The chain runs to 263 residues: Endonuclease 8 (263 aa).

Pro-2 acts as the Schiff-base intermediate with DNA in catalysis. The Proton donor role is filled by Glu-3. Lys-53 serves as the catalytic Proton donor; for beta-elimination activity. Gln-70, Arg-125, and Asn-169 together coordinate DNA. The segment at 229–263 (KVFHRDGEACERCGGIIEKTTLSSRPFYWCPHCQK) adopts an FPG-type zinc-finger fold. Arg-253 (proton donor; for delta-elimination activity) is an active-site residue.

This sequence belongs to the FPG family. The cofactor is Zn(2+).

It carries out the reaction 2'-deoxyribonucleotide-(2'-deoxyribose 5'-phosphate)-2'-deoxyribonucleotide-DNA = a 3'-end 2'-deoxyribonucleotide-(2,3-dehydro-2,3-deoxyribose 5'-phosphate)-DNA + a 5'-end 5'-phospho-2'-deoxyribonucleoside-DNA + H(+). Its function is as follows. Involved in base excision repair of DNA damaged by oxidation or by mutagenic agents. Acts as a DNA glycosylase that recognizes and removes damaged bases. Has a preference for oxidized pyrimidines, such as thymine glycol, 5,6-dihydrouracil and 5,6-dihydrothymine. Has AP (apurinic/apyrimidinic) lyase activity and introduces nicks in the DNA strand. Cleaves the DNA backbone by beta-delta elimination to generate a single-strand break at the site of the removed base with both 3'- and 5'-phosphates. The chain is Endonuclease 8 from Salmonella paratyphi A (strain AKU_12601).